The primary structure comprises 1342 residues: DNA-directed RNA polymerase subunit beta (1342 aa).

The protein belongs to the RNA polymerase beta chain family. In terms of assembly, the RNAP catalytic core consists of 2 alpha, 1 beta, 1 beta' and 1 omega subunit. When a sigma factor is associated with the core the holoenzyme is formed, which can initiate transcription.

It catalyses the reaction RNA(n) + a ribonucleoside 5'-triphosphate = RNA(n+1) + diphosphate. Functionally, DNA-dependent RNA polymerase catalyzes the transcription of DNA into RNA using the four ribonucleoside triphosphates as substrates. In Proteus mirabilis (strain HI4320), this protein is DNA-directed RNA polymerase subunit beta.